The primary structure comprises 210 residues: NAD(P)H-quinone oxidoreductase subunit I (210 aa).

4Fe-4S ferredoxin-type domains lie at 55-84 (GRIH…VDWV) and 95-124 (RNYS…MTEE). [4Fe-4S] cluster-binding residues include Cys-64, Cys-67, Cys-70, Cys-74, Cys-104, Cys-107, Cys-110, and Cys-114.

It belongs to the complex I 23 kDa subunit family. As to quaternary structure, NDH-1 is composed of at least 11 different subunits. The cofactor is [4Fe-4S] cluster.

The protein resides in the cellular thylakoid membrane. The catalysed reaction is a plastoquinone + NADH + (n+1) H(+)(in) = a plastoquinol + NAD(+) + n H(+)(out). It carries out the reaction a plastoquinone + NADPH + (n+1) H(+)(in) = a plastoquinol + NADP(+) + n H(+)(out). In terms of biological role, NDH-1 shuttles electrons from an unknown electron donor, via FMN and iron-sulfur (Fe-S) centers, to quinones in the respiratory and/or the photosynthetic chain. The immediate electron acceptor for the enzyme in this species is believed to be plastoquinone. Couples the redox reaction to proton translocation, and thus conserves the redox energy in a proton gradient. In Synechococcus sp. (strain CC9902), this protein is NAD(P)H-quinone oxidoreductase subunit I.